We begin with the raw amino-acid sequence, 381 residues long: Cytochrome b (381 aa).

4 helical membrane passes run 34–54 (FGSHLGLCLIIQILTGLFLAM), 78–99 (WLIRNIHANGASLFFICVYLHI), 114–134 (WNIGVILLFLLMATAFVGYVL), and 179–199 (FFAFHFLLPFLILALTVIHLL). The heme b site is built by His84 and His98. Residues His183 and His197 each coordinate heme b. His202 contacts a ubiquinone. 4 helical membrane-spanning segments follow: residues 227-247 (YKDLLGFFVMIFFLAALALFM), 289-309 (LGGVLALLFSIFILMLVPLLH), 321-341 (MTQILFWFLVANSIILTWIGG), and 348-368 (FIMVGQIASISYFSLFLIIMP).

Belongs to the cytochrome b family. In terms of assembly, the cytochrome bc1 complex contains 3 respiratory subunits (MT-CYB, CYC1 and UQCRFS1), 2 core proteins (UQCRC1 and UQCRC2) and probably 6 low-molecular weight proteins. Heme b is required as a cofactor.

Its subcellular location is the mitochondrion inner membrane. Component of the ubiquinol-cytochrome c reductase complex (complex III or cytochrome b-c1 complex) that is part of the mitochondrial respiratory chain. The b-c1 complex mediates electron transfer from ubiquinol to cytochrome c. Contributes to the generation of a proton gradient across the mitochondrial membrane that is then used for ATP synthesis. This Carcharhinus porosus (Smalltail shark) protein is Cytochrome b (mt-cyb).